A 548-amino-acid chain; its full sequence is Zinc metalloproteinase dpy-31 (548 aa).

A signal peptide spans 1–24 (MSLLRSASLLLVVVTAALPPCTLG). Residues 25–150 (YSLHDGSRLD…KTGQRRVKRK (126 aa)) constitute a propeptide that is removed on maturation. The Peptidase M12A domain maps to 150-349 (KFIGSDLRRW…IRLMNKIYCS (200 aa)). A glycan (N-linked (GlcNAc...) asparagine) is linked at N190. 5 disulfide bridges follow: C193–C348, C216–C237, C352–C372, C374–C383, and C394–C422. H245 serves as a coordination point for Zn(2+). E246 is a catalytic residue. Zn(2+)-binding residues include H249 and H255. The region spanning 344 to 384 (NKIYCSNVCSRKLPCQRGGYTDPRRCDRCRCPDGFTGQFCE) is the EGF-like domain. The 117-residue stretch at 394 to 510 (CGGRIQVNSG…RGFEARARAL (117 aa)) folds into the CUB domain. N461 is a glycosylation site (N-linked (GlcNAc...) asparagine). The region spanning 513-547 (NGQWASWTPWTPCTASCGACGSRMRTRVCPHGACP) is the TSP type-1 domain. 3 disulfide bridges follow: C525/C546, C529/C546, and C541/C546.

Requires Zn(2+) as cofactor.

It is found in the secreted. In terms of biological role, metalloprotease which cleaves the carboxyl terminus of procollagens to mature collagens. Probably involved in cuticular collagen maturation. This is Zinc metalloproteinase dpy-31 from Haemonchus contortus (Barber pole worm).